We begin with the raw amino-acid sequence, 141 residues long: Sperm protein associated with the nucleus on the X chromosome N3 (141 aa).

A compositionally biased stretch (polar residues) spans 1-10; the sequence is MEQPTSSTNG. 2 disordered regions span residues 1-47 and 66-141; these read MEQP…TKTS and NQLE…SGED. Basic and acidic residues predominate over residues 11 to 26; sequence EKTKSPCESNNKKNDE. Polar residues predominate over residues 66–80; that stretch reads NQLENEQSQENSINP. Residues 84-103 show a composition bias toward acidic residues; the sequence is EEDEGVDLSEGSSNEDEDLG. The span at 132-141 shows a compositional bias: polar residues; the sequence is EGSSQDSGED.

It belongs to the SPAN-X family.

The sequence is that of Sperm protein associated with the nucleus on the X chromosome N3 (SPANXN3) from Homo sapiens (Human).